We begin with the raw amino-acid sequence, 158 residues long: MATEKTYPMTQEGKEKLENELEQLKTVRRKEVVERIKIARSFGDLSENSEYDAAKDEQAFVEGRITQLENMIRNAVIIEDTGEESTVVTLGKTVTFKELPDGDEEAYTIVGSAEADPFEGRISNDSPIAKSLLGKQIGEKVVIQTPGGEMQVEIISVK.

Residues 3–75 (TEKTYPMTQE…TQLENMIRNA (73 aa)) are a coiled coil.

This sequence belongs to the GreA/GreB family.

Necessary for efficient RNA polymerase transcription elongation past template-encoded arresting sites. The arresting sites in DNA have the property of trapping a certain fraction of elongating RNA polymerases that pass through, resulting in locked ternary complexes. Cleavage of the nascent transcript by cleavage factors such as GreA or GreB allows the resumption of elongation from the new 3'terminus. GreA releases sequences of 2 to 3 nucleotides. This chain is Transcription elongation factor GreA, found in Bacillus cytotoxicus (strain DSM 22905 / CIP 110041 / 391-98 / NVH 391-98).